The sequence spans 35 residues: Thaumatin-like protein 6 (35 aa).

The protein belongs to the thaumatin family.

The protein is Thaumatin-like protein 6 of Glebionis coronaria (Crown daisy).